The sequence spans 288 residues: Allergen Asp f 7 homolog (288 aa).

The signal sequence occupies residues 1–20 (MAPQFLKALTVATALGATLA). Low complexity-rich tracts occupy residues 48-107 (TVHG…SSSV) and 117-129 (TTST…TTST). The interval 48 to 161 (TVHGTPGPDY…PPVVSIPPIG (114 aa)) is disordered. Residues 130-151 (TPPPPPPAMTTPPPPPPPPATK) are compositionally biased toward pro residues. N-linked (GlcNAc...) asparagine glycosylation is present at N268.

Its subcellular location is the secreted. This Arthroderma benhamiae (strain ATCC MYA-4681 / CBS 112371) (Trichophyton mentagrophytes) protein is Allergen Asp f 7 homolog.